The chain runs to 66 residues: Beta-toxin Chui4 (66 aa).

In terms of domain architecture, LCN-type CS-alpha/beta spans 1 to 66; that stretch reads KEGYLVELGT…VWPLKNKTCK (66 aa). Disulfide bonds link C12–C65, C16–C41, C25–C46, and C29–C48.

This sequence belongs to the long (4 C-C) scorpion toxin superfamily. Sodium channel inhibitor family. Beta subfamily. In terms of tissue distribution, expressed by the venom gland.

The protein resides in the secreted. Functionally, beta toxins bind voltage-independently at site-4 of sodium channels (Nav) and shift the voltage of activation toward more negative potentials thereby affecting sodium channel activation and promoting spontaneous and repetitive firing. Acts on human sodium channel Nav1.6/SCN8A. Also able to weakly shift the activation curves of human Nav1.2/SCN2A and Nav1.4/SCN4A. The chain is Beta-toxin Chui4 from Centruroides huichol (Scorpion).